The sequence spans 559 residues: Large neutral amino acids transporter small subunit 3 (559 aa).

A helical membrane pass occupies residues 20 to 40 (VLENLFFSAVLLGWGSLLIIL). N57 is a glycosylation site (N-linked (GlcNAc...) asparagine). The next 5 membrane-spanning stretches (helical) occupy residues 78-98 (LGFTIGSFVLSATTLPLGILM), 105-124 (PVRLVGSACFTASCTLMALA), 131-151 (LSPLIFLALSLNGFGGICLTF), 168-188 (MALMIGSYASSAITFPGIKLI), and 191-211 (AGVAFVVIMFTWSGLACLIFL). Residues N212 and N229 are each glycosylated (N-linked (GlcNAc...) asparagine). Phosphoserine is present on residues S237, S262, and S267. 6 helical membrane-spanning segments follow: residues 304–324 (FLWSLLTMGMTQLRIIFYMAA), 357–377 (SVFGAMQLLCLLTCPLIGYIM), 419–439 (AISAFTLTNLLLVGFGITCLI), 446–466 (FVTFVLHTIVRGFFHSACGSL), 485–505 (LISAVFALLQQPLFMAMVGPL), and 510–530 (FWVNLGLLLFSLLGFLLPSYL).

The protein belongs to the SLC43A transporter (TC 2.A.1.44) family. In terms of tissue distribution, ubiquitously expressed in fetus and adult. Highest expression in adult pancreas, liver, skeletal muscle. In fetus, highest expression in liver and lower levels in kidney, and lung. Exclusively expressed in the glomeruli along the glomerular capillary walls.

The protein resides in the cell membrane. Its subcellular location is the apical cell membrane. It is found in the endoplasmic reticulum membrane. The enzyme catalyses D-leucine(in) = D-leucine(out). It catalyses the reaction L-leucine(in) = L-leucine(out). The catalysed reaction is L-isoleucine(in) = L-isoleucine(out). It carries out the reaction L-methionine(in) = L-methionine(out). The enzyme catalyses L-phenylalanine(in) = L-phenylalanine(out). It catalyses the reaction L-valine(in) = L-valine(out). Functionally, uniport that mediates the transport of neutral amino acids such as L-leucine, L-isoleucine, L-valine, and L-phenylalanine. The transport activity is sodium ions-independent, electroneutral and mediated by a facilitated diffusion. This Homo sapiens (Human) protein is Large neutral amino acids transporter small subunit 3.